The primary structure comprises 188 residues: Threonylcarbamoyl-AMP synthase (188 aa).

Residues 3-188 enclose the YrdC-like domain; it reads QLHPSDIKDI…RSGKILRNGQ (186 aa).

Belongs to the SUA5 family. TsaC subfamily.

The protein localises to the cytoplasm. The catalysed reaction is L-threonine + hydrogencarbonate + ATP = L-threonylcarbamoyladenylate + diphosphate + H2O. Its function is as follows. Required for the formation of a threonylcarbamoyl group on adenosine at position 37 (t(6)A37) in tRNAs that read codons beginning with adenine. Catalyzes the conversion of L-threonine, HCO(3)(-)/CO(2) and ATP to give threonylcarbamoyl-AMP (TC-AMP) as the acyladenylate intermediate, with the release of diphosphate. In Shewanella baltica (strain OS195), this protein is Threonylcarbamoyl-AMP synthase.